The chain runs to 253 residues: 5'/3'-nucleotidase SurE (253 aa).

A divalent metal cation contacts are provided by aspartate 8, aspartate 9, serine 39, and asparagine 92.

It belongs to the SurE nucleotidase family. A divalent metal cation is required as a cofactor.

The protein localises to the cytoplasm. The enzyme catalyses a ribonucleoside 5'-phosphate + H2O = a ribonucleoside + phosphate. It catalyses the reaction a ribonucleoside 3'-phosphate + H2O = a ribonucleoside + phosphate. It carries out the reaction [phosphate](n) + H2O = [phosphate](n-1) + phosphate + H(+). Functionally, nucleotidase with a broad substrate specificity as it can dephosphorylate various ribo- and deoxyribonucleoside 5'-monophosphates and ribonucleoside 3'-monophosphates with highest affinity to 3'-AMP. Also hydrolyzes polyphosphate (exopolyphosphatase activity) with the preference for short-chain-length substrates (P20-25). Might be involved in the regulation of dNTP and NTP pools, and in the turnover of 3'-mononucleotides produced by numerous intracellular RNases (T1, T2, and F) during the degradation of various RNAs. The protein is 5'/3'-nucleotidase SurE of Citrobacter koseri (strain ATCC BAA-895 / CDC 4225-83 / SGSC4696).